A 199-amino-acid polypeptide reads, in one-letter code: Imidazoleglycerol-phosphate dehydratase (199 aa).

This sequence belongs to the imidazoleglycerol-phosphate dehydratase family.

The protein resides in the cytoplasm. It carries out the reaction D-erythro-1-(imidazol-4-yl)glycerol 3-phosphate = 3-(imidazol-4-yl)-2-oxopropyl phosphate + H2O. It participates in amino-acid biosynthesis; L-histidine biosynthesis; L-histidine from 5-phospho-alpha-D-ribose 1-diphosphate: step 6/9. This chain is Imidazoleglycerol-phosphate dehydratase, found in Kineococcus radiotolerans (strain ATCC BAA-149 / DSM 14245 / SRS30216).